The sequence spans 222 residues: MSDICDANKLKHRFRGYFPVVIDVETAGFNSQTDALLEIAVTLLKMDDEGLLGIDKTLHFHIEPFEGANLEPEALAFNGIDPTNPLRGAVSEKDAFLEIFKAVKKAQKASDCHRSIIVAHNAAFDHGFVSKAIERCDLKRSPFHPFATFDTATLAGLAIGHTVLAKACIMAGIPFDNKEAHSALYDTERTAELFCYIVNRWKTLGGWPLLATSESEDMDSEE.

The Exonuclease domain occupies 20 to 194 (VVIDVETAGF…YDTERTAELF (175 aa)). Mg(2+) is bound by residues aspartate 23, glutamate 25, histidine 181, and aspartate 186. Histidine 181 (proton donor/acceptor) is an active-site residue.

Belongs to the RNase T family. In terms of assembly, homodimer. Requires Mg(2+) as cofactor.

Functionally, trims short 3' overhangs of a variety of RNA species, leaving a one or two nucleotide 3' overhang. Responsible for the end-turnover of tRNA: specifically removes the terminal AMP residue from uncharged tRNA (tRNA-C-C-A). Also appears to be involved in tRNA biosynthesis. The sequence is that of Ribonuclease T from Shewanella oneidensis (strain ATCC 700550 / JCM 31522 / CIP 106686 / LMG 19005 / NCIMB 14063 / MR-1).